The chain runs to 336 residues: Protein phosphatase 1 regulatory subunit pprA (336 aa).

Residues 1 to 10 (MSEQNTIINS) are compositionally biased toward low complexity. Residues 1-24 (MSEQNTIINSEEIKENEKIESETE) form a disordered region. A compositionally biased stretch (basic and acidic residues) spans 11–21 (EEIKENEKIES). 12 LRR repeats span residues 26–47 (PITYLDLTGQPHTSIGDSYNIP), 49–70 (TLLDLDLTNCKITKIENINHLK), 71–92 (NLKKLCFRQNLIEKIENIDQLK), 93–114 (ELESLDLYDNKLQVIENIKDFQ), 115–136 (SLTYLDLSFNEIRIVENLSIKD), 139–160 (KIKELYLANNKITKIENLQELV), 161–182 (PIKNLELGSNRLREIENLENLV), 183–204 (NIETLWLGRNKITEIKGINHLS), 205–225 (HLRILSLQSNRLTEIGVKGLV), 229–250 (CLEELYLSHNGITDIDGLQSLK), 251–272 (QLRTLDISANKIKTLVGLNELP), and 273–294 (DLDEIWCNDNLVDSMDNIEQQV). The LRRCT domain occupies 306–336 (NPVATHVQYRRMFINMFPQLKQLDATMVKRN).

This sequence belongs to the SDS22 family.

The protein localises to the nucleus. Functionally, regulatory subunit of protein phosphatase 1. The chain is Protein phosphatase 1 regulatory subunit pprA (pprA) from Dictyostelium discoideum (Social amoeba).